Here is a 517-residue protein sequence, read N- to C-terminus: Crotonobetaine/carnitine--CoA ligase (517 aa).

It belongs to the ATP-dependent AMP-binding enzyme family.

It carries out the reaction 4-(trimethylamino)butanoate + ATP + CoA = 4-(trimethylamino)butanoyl-CoA + AMP + diphosphate. The enzyme catalyses crotonobetaine + ATP + CoA = crotonobetainyl-CoA + AMP + diphosphate. It catalyses the reaction (R)-carnitine + ATP + CoA = (R)-carnitinyl-CoA + AMP + diphosphate. Its pathway is amine and polyamine metabolism; carnitine metabolism. Its function is as follows. Catalyzes the transfer of CoA to carnitine, generating the initial carnitinyl-CoA needed for the CaiB reaction cycle. Also has activity toward crotonobetaine and gamma-butyrobetaine. The polypeptide is Crotonobetaine/carnitine--CoA ligase (Escherichia coli O1:K1 / APEC).